We begin with the raw amino-acid sequence, 55 residues long: uncharacterized protein (55 aa).

A signal peptide spans 1-25 (MKFVKAIWPFVAVAIVFMFMSAFKF).

This is an uncharacterized protein from Bacillus subtilis (strain 168).